Consider the following 175-residue polypeptide: Adenine phosphoribosyltransferase (175 aa).

Belongs to the purine/pyrimidine phosphoribosyltransferase family. In terms of assembly, homodimer.

Its subcellular location is the cytoplasm. The enzyme catalyses AMP + diphosphate = 5-phospho-alpha-D-ribose 1-diphosphate + adenine. It participates in purine metabolism; AMP biosynthesis via salvage pathway; AMP from adenine: step 1/1. Catalyzes a salvage reaction resulting in the formation of AMP, that is energically less costly than de novo synthesis. The chain is Adenine phosphoribosyltransferase from Thermosipho melanesiensis (strain DSM 12029 / CIP 104789 / BI429).